The chain runs to 176 residues: Large ribosomal subunit protein eL20 (176 aa).

The protein belongs to the eukaryotic ribosomal protein eL20 family. In terms of assembly, component of the large ribosomal subunit.

Its subcellular location is the cytoplasm. Component of the large ribosomal subunit. The ribosome is a large ribonucleoprotein complex responsible for the synthesis of proteins in the cell. The sequence is that of Large ribosomal subunit protein eL20 (rpl18a) from Salmo salar (Atlantic salmon).